Reading from the N-terminus, the 600-residue chain is Alpha pinene synthase, chloroplastic (600 aa).

The segment at M1 to R26 is disordered. The N-terminal 31 residues, M1–R31, are a transit peptide targeting the chloroplast. Mg(2+) contacts are provided by D354, D358, D498, and E506. Positions D354–D358 match the DDXXD motif motif.

It belongs to the terpene synthase family. Tpsa subfamily. It depends on Mg(2+) as a cofactor. Mn(2+) is required as a cofactor. In terms of tissue distribution, barely detectable in leaves.

It localises to the plastid. Its subcellular location is the chloroplast. It carries out the reaction (2E)-geranyl diphosphate = alpha-pinene + diphosphate. It functions in the pathway secondary metabolite biosynthesis; terpenoid biosynthesis. In terms of biological role, monoterpene synthase involved in the biosynthesis of volatile compounds widely used in aromatherapy and folk medicine, and present in culinary herbs. Mediates the conversion of (2E)-geranyl diphosphate (GPP) into alpha-pinene and, as minor compounds, into alpha-phellandrene, limonene and alpha-terpinolene. The protein is Alpha pinene synthase, chloroplastic of Lavandula stoechas (Butterfly lavender).